The sequence spans 604 residues: Kelch-like protein 20 (604 aa).

The BTB domain maps to 63-130; sequence CDVVLVVGAK…AYTSQITVEE (68 aa). Residues 165–267 enclose the BACK domain; that stretch reads CLGIRAFADT…SPKFLVGTVG (103 aa). Kelch repeat units follow at residues 314–360, 362–408, 409–455, 457–502, 504–549, and 551–596; these read VLFA…VLDD, LYAV…VLGG, FLYA…VLGG, LYAV…VYQD, IYAV…VVNG, and LMAV…VIKM.

As to quaternary structure, component of the BCR(KLHL20) E3 ubiquitin ligase complex, at least composed of CUL3, KLHL20 and RBX1. Interacts with PDZ-RhoGEF/ARHGEF11, DAPK1, PML and CORO7. Interacts with F-actin. Interacts with IFN-gamma (IFNG). Interacts (via kelch repeats) with IVNS1ABP (via kelch repeats); this interaction blocks the assembly of CUL3-KLHL20 complex.

It localises to the cytoplasm. Its subcellular location is the perinuclear region. The protein resides in the nucleus. It is found in the golgi apparatus. The protein localises to the trans-Golgi network. It localises to the cell projection. Its subcellular location is the axon. The protein resides in the dendrite. It participates in protein modification; protein ubiquitination. Functionally, substrate-specific adapter of a BCR (BTB-CUL3-RBX1) E3 ubiquitin-protein ligase complex involved in interferon response and anterograde Golgi to endosome transport. The BCR(KLHL20) E3 ubiquitin ligase complex mediates the ubiquitination of DAPK1, leading to its degradation by the proteasome, thereby acting as a negative regulator of apoptosis. The BCR(KLHL20) E3 ubiquitin ligase complex also specifically mediates 'Lys-33'-linked ubiquitination. Involved in anterograde Golgi to endosome transport by mediating 'Lys-33'-linked ubiquitination of CORO7, promoting interaction between CORO7 and EPS15, thereby facilitating actin polymerization and post-Golgi trafficking. Also acts as a regulator of endothelial migration during angiogenesis by controlling the activation of Rho GTPases. The BCR(KLHL20) E3 ubiquitin ligase complex acts as a regulator of neurite outgrowth by mediating ubiquitination and degradation of PDZ-RhoGEF/ARHGEF11. This Mus musculus (Mouse) protein is Kelch-like protein 20 (Klhl20).